We begin with the raw amino-acid sequence, 518 residues long: Mitochondrial distribution and morphology protein 34 (518 aa).

The SMP-LTD domain maps to 1 to 198 (MSFKVNWNTL…LPTLIHRLSL (198 aa)). Disordered stretches follow at residues 335 to 369 (SRPK…SEMS) and 491 to 518 (IPDV…PYQV). Positions 336–350 (RPKRRVIKLGSKKSS) are enriched in basic residues. Residues 492-506 (PDVKSHPGTGRKLDT) show a composition bias toward basic and acidic residues.

The protein belongs to the MDM34 family. As to quaternary structure, component of the ER-mitochondria encounter structure (ERMES) or MDM complex, composed of MMM1, MDM10, MDM12 and MDM34.

The protein localises to the mitochondrion outer membrane. In terms of biological role, component of the ERMES/MDM complex, which serves as a molecular tether to connect the endoplasmic reticulum (ER) and mitochondria. Components of this complex are involved in the control of mitochondrial shape and protein biogenesis, and function in nonvesicular lipid trafficking between the ER and mitochondria. MDM34 is required for the interaction of the ER-resident membrane protein MMM1 and the outer mitochondrial membrane-resident beta-barrel protein MDM10. The chain is Mitochondrial distribution and morphology protein 34 from Meyerozyma guilliermondii (strain ATCC 6260 / CBS 566 / DSM 6381 / JCM 1539 / NBRC 10279 / NRRL Y-324) (Yeast).